The chain runs to 298 residues: Urease accessory protein UreD (298 aa).

The protein belongs to the UreD family. In terms of assembly, ureD, UreF and UreG form a complex that acts as a GTP-hydrolysis-dependent molecular chaperone, activating the urease apoprotein by helping to assemble the nickel containing metallocenter of UreC. The UreE protein probably delivers the nickel.

Its subcellular location is the cytoplasm. In terms of biological role, required for maturation of urease via the functional incorporation of the urease nickel metallocenter. The chain is Urease accessory protein UreD from Marinobacter nauticus (strain ATCC 700491 / DSM 11845 / VT8) (Marinobacter aquaeolei).